A 313-amino-acid polypeptide reads, in one-letter code: 2-oxoglutarate-dependent dioxygenase eupC (313 aa).

The Fe2OG dioxygenase domain occupies 187–284; that stretch reads PSIPMRFLHY…LNAKALDGSG (98 aa). Fe cation is bound by residues His212, Asp214, and His263. 2-oxoglutarate is bound at residue Lys274.

It belongs to the iron/ascorbate-dependent oxidoreductase family. The cofactor is Fe(2+).

It functions in the pathway secondary metabolite biosynthesis; terpenoid biosynthesis. Functionally, 2-oxoglutarate-dependent dioxygenase; part of the gene cluster that mediates the biosynthesis of eupenifeldin, a bistropolone meroterpenoid that acts as an antitumor agent. The first step of eupenifeldin biosynthesis is the biosynthesis of 3-methylorcinaldehyde performed by the non-reducing polyketide synthase eupA. Oxidative dearomatization of 3-methylorcinaldehyde likely catalyzed by the FAD-dependent monooxygenase eupB is followed by oxidative ring expansion by the 2-oxoglutarate-dependent dioxygenase eupC to provide the first tropolone metabolite, tropolone stipitaldehyde. In parallel, generation of sesquiterpene alpha-humulene from farnesylpyrophosphate (FPP) is catalyzed by the terpene cyclase eupE. The cytochrome P450 monooxygenase eupD then hydroxylates humulene to humulenol. The putative Diels-Alderase eupF probably catalyzes the formation of the tropolone-humulene skeleton by linking humulenol and the polyketide moiety. The short-chain dehydrogenase/reductase eupG and the flavin-dependent monooxygenase eupH are also essential for eupenifeldin biosynthesis and are likely the additional decorating enzymes of the tropolone-humulene skeleton to produce final eupenifeldin or derivatives. This Phoma sp protein is 2-oxoglutarate-dependent dioxygenase eupC.